The sequence spans 467 residues: ATP-dependent protease ATPase subunit HslU (467 aa).

Residues Ile-20, 62–67 (GVGKTE), Asp-280, Glu-345, and Arg-417 each bind ATP.

It belongs to the ClpX chaperone family. HslU subfamily. As to quaternary structure, a double ring-shaped homohexamer of HslV is capped on each side by a ring-shaped HslU homohexamer. The assembly of the HslU/HslV complex is dependent on binding of ATP.

The protein resides in the cytoplasm. Functionally, ATPase subunit of a proteasome-like degradation complex; this subunit has chaperone activity. The binding of ATP and its subsequent hydrolysis by HslU are essential for unfolding of protein substrates subsequently hydrolyzed by HslV. HslU recognizes the N-terminal part of its protein substrates and unfolds these before they are guided to HslV for hydrolysis. The protein is ATP-dependent protease ATPase subunit HslU of Ligilactobacillus salivarius (strain UCC118) (Lactobacillus salivarius).